Consider the following 709-residue polypeptide: FACT complex subunit SSRP1 (709 aa).

At Ala2 the chain carries N-acetylalanine. Lys90 participates in a covalent cross-link: Glycyl lysine isopeptide (Lys-Gly) (interchain with G-Cter in SUMO2). Thr170 carries the post-translational modification Phosphothreonine. The residue at position 233 (Lys233) is an N6-acetyllysine. Glycyl lysine isopeptide (Lys-Gly) (interchain with G-Cter in SUMO2) cross-links involve residues Lys296 and Lys364. The residue at position 413 (Lys413) is an N6-acetyllysine. Ser437 is modified (phosphoserine). Tyr441 is modified (phosphotyrosine). Ser444 is modified (phosphoserine). Tyr452 bears the Phosphotyrosine mark. Residues 458-709 (EEGKIREENA…SEDSASGSDE (252 aa)) are disordered. Positions 470–496 (SSDDSGEETDESFNPGEEEEDVAEEFD) are enriched in acidic residues. Phosphoserine is present on Ser471. A compositionally biased stretch (low complexity) spans 497-507 (SNASASSSSNE). A Phosphoserine; by CK2 modification is found at Ser510. Residues 515-533 (KKRKQLKKAKMAKDRKSRK) are compositionally biased toward basic residues. 2 stretches are compositionally biased toward basic and acidic residues: residues 534-546 (KPVEVKKGKDPNA) and 577-624 (LSKK…SSKR). Lys542 bears the N6-acetyllysine mark. Positions 547 to 615 (PKRPMSAYML…DYEKAMKEYE (69 aa)) form a DNA-binding region, HMG box. Basic residues predominate over residues 625–634 (DKSKKKKKVK). Residues 643–659 (PSRGSSSKSSSRQLSES) show a composition bias toward low complexity. 7 positions are modified to phosphoserine: Ser657, Ser659, Ser667, Ser668, Ser671, Ser672, and Ser673. Ser688 carries the phosphoserine; by CK2 modification. Residues 696–709 (TPPSSEDSASGSDE) are compositionally biased toward polar residues.

Belongs to the SSRP1 family. As to quaternary structure, interacts with MYOG (via C-terminal region). Component of the FACT complex, a stable heterodimer of SSRP1 and SUPT16H. Also a component of a CK2-SPT16-SSRP1 complex which forms following UV irradiation, composed of SSRP1, SUPT16H, CSNK2A1, CSNK2A2 and CSNK2B. Binds to histone H3-H4 tetramers, but not to intact nucleosomes. Identified in a centromere complex containing histones H2A, H2B and H4, and at least CENPA, CENPB, CENPC, CENPT, CENPN, HJURP, SUPT16H, SSRP1 and RSF1. Interacts with isoform gamma of TP63. Interacts with FYTTD1/UIF. Interacts with SRF. Interacts with NEK9. In terms of assembly, (Microbial infection) Interacts with Herpes simplex virus 1 (HHV-1) protein ICP22; this interaction relocalizes the FACT complex to viral genomes in infected cells. In terms of processing, phosphorylated by CK2 following UV but not gamma irradiation. Phosphorylation inhibits its DNA-binding activity. Ubiquitinated. Polyubiquitinated following caspase cleavage resulting in degradation of the N-terminal ubiquitinated part of the cleaved protein. Post-translationally, sumoylated.

The protein resides in the nucleus. It is found in the nucleolus. The protein localises to the chromosome. Functionally, component of the FACT complex, a general chromatin factor that acts to reorganize nucleosomes. The FACT complex is involved in multiple processes that require DNA as a template such as mRNA elongation, DNA replication and DNA repair. During transcription elongation the FACT complex acts as a histone chaperone that both destabilizes and restores nucleosomal structure. It facilitates the passage of RNA polymerase II and transcription by promoting the dissociation of one histone H2A-H2B dimer from the nucleosome, then subsequently promotes the reestablishment of the nucleosome following the passage of RNA polymerase II. The FACT complex is probably also involved in phosphorylation of 'Ser-392' of p53/TP53 via its association with CK2 (casein kinase II). Binds specifically to double-stranded DNA and at low levels to DNA modified by the antitumor agent cisplatin. May potentiate cisplatin-induced cell death by blocking replication and repair of modified DNA. Also acts as a transcriptional coactivator for p63/TP63. In Homo sapiens (Human), this protein is FACT complex subunit SSRP1 (SSRP1).